Reading from the N-terminus, the 94-residue chain is Cell division protein FtsB (94 aa).

At 1 to 3 the chain is on the cytoplasmic side; that stretch reads MRA. The chain crosses the membrane as a helical span at residues 4–21; it reads FAVLLIIALGWLQYTLWF. Over 22–94 the chain is Periplasmic; that stretch reads GKNGMEDYAQ…YRIIDENSEE (73 aa). Positions 40–60 form a coiled coil; that stretch reads EEVNQGLRNRNGQMFAEIDDL.

Belongs to the FtsB family. As to quaternary structure, part of a complex composed of FtsB, FtsL and FtsQ.

It is found in the cell inner membrane. In terms of biological role, essential cell division protein. May link together the upstream cell division proteins, which are predominantly cytoplasmic, with the downstream cell division proteins, which are predominantly periplasmic. The chain is Cell division protein FtsB from Aliivibrio salmonicida (strain LFI1238) (Vibrio salmonicida (strain LFI1238)).